The following is a 298-amino-acid chain: MRIAILSQGPQLYSTKRLVEAALARGHEVKVINPLKCYMNINMTKPSIHMAGKDLGHFDAVIPRIGASVTFYGSAVLRQFEMMGVYAVNGSIGIARSRDKLRSMQLLSRQGIGLPITGFANKPSDIPDLIDMVGGAPLVVKLLEGTQGIGVVLAETRKAAESVLEAFMGLKANIMVQEYIAEAQGADIRCFVLGDKVIAAMKRQAKPGEFRSNLHRGGSATLVKLTPEERSVALRAAKTMGLNIAGVDLLRSNHGPVVMEVNSSPGLEGIEKATQKDVADAIICFMEKNANKSIKSAQ.

An ATP-grasp domain is found at 104–287 (MQLLSRQGIG…VADAIICFME (184 aa)). Residues lysine 141, 178–179 (EY), aspartate 187, and 211–213 (RSN) contribute to the ATP site. 3 residues coordinate Mg(2+): aspartate 248, glutamate 260, and asparagine 262. Mn(2+)-binding residues include aspartate 248, glutamate 260, and asparagine 262.

This sequence belongs to the RimK family. Mg(2+) serves as cofactor. It depends on Mn(2+) as a cofactor.

The sequence is that of Probable alpha-L-glutamate ligase 2 from Shewanella frigidimarina (strain NCIMB 400).